We begin with the raw amino-acid sequence, 334 residues long: MRIVINGFGRIGRLVLRQILKRNSPIEVVAINDLVAGDLLTYLFKYDSTHGSFAPQATFSDGCLVMGERKVHFLAEKDVQKLPWKDLDVDVVVESTGLFVNRDDVAKHLDSGAKRVLITAPAKGDVPTFVMGVNHQQFDPADVIISNASCTTNCLAPLAKVLLDNFGIEEGLMTTVHAATATQSVVDGPSRKDWRGGRGAFQNIIPASTGAAKAVGLCLPELKGKLTGMAFRVPVADVSVVDLTVKLSSATTYEAICEAVKHAANTSMKNIMYYTEEAVVSSDFIGCEYSSVFDAQAGVALNDRFFKLVAWYDNEIGYATRIVDLLEYVQENSK.

NAD(+) is bound by residues Arg-10–Ile-11, Asp-33, Lys-77, and Thr-119. D-glyceraldehyde 3-phosphate contacts are provided by residues Ser-149–Thr-151, Thr-180, Thr-209–Gly-210, and Arg-232. Cys-150 functions as the Nucleophile in the catalytic mechanism. Residue Asn-314 coordinates NAD(+).

Belongs to the glyceraldehyde-3-phosphate dehydrogenase family. In terms of assembly, homotetramer.

Its subcellular location is the cytoplasm. The enzyme catalyses D-glyceraldehyde 3-phosphate + phosphate + NAD(+) = (2R)-3-phospho-glyceroyl phosphate + NADH + H(+). Its pathway is carbohydrate degradation; glycolysis; pyruvate from D-glyceraldehyde 3-phosphate: step 1/5. Catalyzes the oxidative phosphorylation of glyceraldehyde 3-phosphate (G3P) to 1,3-bisphosphoglycerate (BPG) using the cofactor NAD. The first reaction step involves the formation of a hemiacetal intermediate between G3P and a cysteine residue, and this hemiacetal intermediate is then oxidized to a thioester, with concomitant reduction of NAD to NADH. The reduced NADH is then exchanged with the second NAD, and the thioester is attacked by a nucleophilic inorganic phosphate to produce BPG. This Chlamydia trachomatis serovar D (strain ATCC VR-885 / DSM 19411 / UW-3/Cx) protein is Glyceraldehyde-3-phosphate dehydrogenase (gap).